The sequence spans 205 residues: Holliday junction branch migration complex subunit RuvA (205 aa).

The interval 1 to 64 (MIAHLRGELV…EDALTLYGFL (64 aa)) is domain I. Residues 65–143 (TQAEYDLFEL…AVPAGGGGVP (79 aa)) are domain II. The tract at residues 144–153 (DGLPVAVAPA) is flexible linker. Residues 153–205 (AGDAWAEASEALIALGYSRGEAAAALARVRAEAGEAPSVETLVRLALKQLYRG) form a domain III region.

The protein belongs to the RuvA family. As to quaternary structure, homotetramer. Forms an RuvA(8)-RuvB(12)-Holliday junction (HJ) complex. HJ DNA is sandwiched between 2 RuvA tetramers; dsDNA enters through RuvA and exits via RuvB. An RuvB hexamer assembles on each DNA strand where it exits the tetramer. Each RuvB hexamer is contacted by two RuvA subunits (via domain III) on 2 adjacent RuvB subunits; this complex drives branch migration. In the full resolvosome a probable DNA-RuvA(4)-RuvB(12)-RuvC(2) complex forms which resolves the HJ.

It is found in the cytoplasm. In terms of biological role, the RuvA-RuvB-RuvC complex processes Holliday junction (HJ) DNA during genetic recombination and DNA repair, while the RuvA-RuvB complex plays an important role in the rescue of blocked DNA replication forks via replication fork reversal (RFR). RuvA specifically binds to HJ cruciform DNA, conferring on it an open structure. The RuvB hexamer acts as an ATP-dependent pump, pulling dsDNA into and through the RuvAB complex. HJ branch migration allows RuvC to scan DNA until it finds its consensus sequence, where it cleaves and resolves the cruciform DNA. The sequence is that of Holliday junction branch migration complex subunit RuvA from Symbiobacterium thermophilum (strain DSM 24528 / JCM 14929 / IAM 14863 / T).